A 366-amino-acid polypeptide reads, in one-letter code: Ribosomal RNA large subunit methyltransferase M (366 aa).

Residues Ser188, 221–224 (CPGG), Asp240, Asp260, and Asp277 each bind S-adenosyl-L-methionine. Catalysis depends on Lys306, which acts as the Proton acceptor.

Belongs to the class I-like SAM-binding methyltransferase superfamily. RNA methyltransferase RlmE family. RlmM subfamily. As to quaternary structure, monomer.

It localises to the cytoplasm. It catalyses the reaction cytidine(2498) in 23S rRNA + S-adenosyl-L-methionine = 2'-O-methylcytidine(2498) in 23S rRNA + S-adenosyl-L-homocysteine + H(+). Catalyzes the 2'-O-methylation at nucleotide C2498 in 23S rRNA. In Salmonella dublin (strain CT_02021853), this protein is Ribosomal RNA large subunit methyltransferase M.